A 137-amino-acid chain; its full sequence is Small ribosomal subunit protein uS12 (137 aa).

Asp89 carries the 3-methylthioaspartic acid modification. Residues 101–137 (SLDTSGVADRKQSRSKYGAKQPKAGAPAAPVKGKGKK) are disordered. Residues 116–137 (KYGAKQPKAGAPAAPVKGKGKK) are compositionally biased toward low complexity.

This sequence belongs to the universal ribosomal protein uS12 family. In terms of assembly, part of the 30S ribosomal subunit. Contacts proteins S8 and S17. May interact with IF1 in the 30S initiation complex.

Its function is as follows. With S4 and S5 plays an important role in translational accuracy. Interacts with and stabilizes bases of the 16S rRNA that are involved in tRNA selection in the A site and with the mRNA backbone. Located at the interface of the 30S and 50S subunits, it traverses the body of the 30S subunit contacting proteins on the other side and probably holding the rRNA structure together. The combined cluster of proteins S8, S12 and S17 appears to hold together the shoulder and platform of the 30S subunit. The chain is Small ribosomal subunit protein uS12 from Chlorobium chlorochromatii (strain CaD3).